An 815-amino-acid chain; its full sequence is Protein SEY1 homolog (815 aa).

Residues Met-1–Asn-737 lie on the Cytoplasmic side of the membrane. The GB1/RHD3-type G domain occupies Thr-28–Pro-260. Residue Gly-38–Ser-45 participates in GTP binding. Positions Ala-298–Glu-321 form a coiled coil. Residues Ile-738–Leu-758 traverse the membrane as a helical segment. The Lumenal segment spans residues Thr-759 to Pro-761. The chain crosses the membrane as a helical span at residues Val-762 to Phe-782. At Ser-783–Lys-815 the chain is on the cytoplasmic side.

Belongs to the TRAFAC class dynamin-like GTPase superfamily. GB1/RHD3 GTPase family. RHD3 subfamily.

It localises to the endoplasmic reticulum membrane. Probable GTP-binding protein that may be involved in cell development. This is Protein SEY1 homolog from Cryptosporidium hominis.